An 81-amino-acid polypeptide reads, in one-letter code: High-potential iron-sulfur protein (81 aa).

[4Fe-4S] cluster contacts are provided by Cys43, Cys46, Cys59, and Cys73.

Belongs to the high-potential iron-sulfur protein (HiPIP) family. As to quaternary structure, homodimer.

Functionally, specific class of high-redox-potential 4Fe-4S ferredoxins. Functions in anaerobic electron transport in most purple and in some other photosynthetic bacteria and in at least one genus (Paracoccus) of halophilic, denitrifying bacteria. This chain is High-potential iron-sulfur protein (hip), found in Thiococcus pfennigii (Thiocapsa pfennigii).